The following is a 140-amino-acid chain: Large ribosomal subunit protein bL17 (140 aa).

This sequence belongs to the bacterial ribosomal protein bL17 family. In terms of assembly, part of the 50S ribosomal subunit. Contacts protein L32.

This Ruegeria pomeroyi (strain ATCC 700808 / DSM 15171 / DSS-3) (Silicibacter pomeroyi) protein is Large ribosomal subunit protein bL17.